The chain runs to 325 residues: MSWITPDLIEILLSILKAVVILLVVVTCGAFMSFGERRLLGLFQNRYGPNRVGWGGSLQLVADMIKMFFKEDWIPKFSDRVIFTLAPMIAFTSLLLAFAIVPVSPTWVVADLNIGILFFLMMAGLAVYAVLFAGWSSNNKYSLLGAMRASAQTLSYEVFLGLSLMGVVAQAGSFNMTDIVNNQADIWNVIPQFFGFVTFAIAGVAVCHRHPFDQPEAEQELADGYHIEYSGMKFGLFFVGEYIGIVTISALMVTLFFGGWHGPFLPPFIWFALKTAFFMMMFILIRASLPRPRYDQVMSFGWKVCLPLTLINLLVTAAVILWQAQ.

A run of 9 helical transmembrane segments spans residues 11 to 31, 50 to 69, 81 to 101, 114 to 134, 154 to 174, 186 to 206, 237 to 257, 265 to 285, and 304 to 324; these read ILLS…CGAF, NRVG…KMFF, VIFT…FAIV, IGIL…LFAG, LSYE…AGSF, IWNV…GVAV, FFVG…TLFF, LPPF…FILI, and VCLP…LWQA.

This sequence belongs to the complex I subunit 1 family. NDH-1 is composed of 13 different subunits. Subunits NuoA, H, J, K, L, M, N constitute the membrane sector of the complex.

It is found in the cell inner membrane. The catalysed reaction is a quinone + NADH + 5 H(+)(in) = a quinol + NAD(+) + 4 H(+)(out). Its function is as follows. NDH-1 shuttles electrons from NADH, via FMN and iron-sulfur (Fe-S) centers, to quinones in the respiratory chain. The immediate electron acceptor for the enzyme in this species is believed to be ubiquinone. Couples the redox reaction to proton translocation (for every two electrons transferred, four hydrogen ions are translocated across the cytoplasmic membrane), and thus conserves the redox energy in a proton gradient. This subunit may bind ubiquinone. This is NADH-quinone oxidoreductase subunit H from Citrobacter koseri (strain ATCC BAA-895 / CDC 4225-83 / SGSC4696).